We begin with the raw amino-acid sequence, 521 residues long: Medium/long-chain-fatty-acid--[acyl-carrier-protein] ligase MbtM (521 aa).

This sequence belongs to the ATP-dependent AMP-binding enzyme family.

The enzyme catalyses a long-chain fatty acid + holo-[ACP] + ATP = a long-chain fatty acyl-[ACP] + AMP + diphosphate. The catalysed reaction is a medium-chain fatty acid + holo-[ACP] + ATP = a medium-chain fatty acyl-[ACP] + AMP + diphosphate. It functions in the pathway siderophore biosynthesis; mycobactin biosynthesis. Functionally, activates lipidic moieties required for mycobactin biosynthesis. Converts medium- to long-chain aliphatic fatty acids into acyl adenylate, which is further transferred on to the phosphopantetheine arm of the carrier protein MbtL. The chain is Medium/long-chain-fatty-acid--[acyl-carrier-protein] ligase MbtM (mbtM) from Mycobacterium sp. (strain MCS).